Consider the following 200-residue polypeptide: MTEVALIDAGGANLGSVRYALQRLGVEPRLVCDARGLEGAARVILPGVGSAPEAMARLNNQGLIEPLLRLQVPLIGICLGMQLLFEHSEEGDVPCLALLPGRVRRLTPAPSIRVPHMGWNRLLPLRASPLLAEVPEGASAYFVHSYAVPLTTAAVAACDHGGMFTAIVQQGVRCGAQFHPERSAETGARILRNFLEMDAA.

Positions 3–200 (EVALIDAGGA…LRNFLEMDAA (198 aa)) constitute a Glutamine amidotransferase type-1 domain. The Nucleophile role is filled by Cys-78. Catalysis depends on residues His-179 and Glu-181.

Heterodimer of HisH and HisF.

The protein resides in the cytoplasm. The catalysed reaction is 5-[(5-phospho-1-deoxy-D-ribulos-1-ylimino)methylamino]-1-(5-phospho-beta-D-ribosyl)imidazole-4-carboxamide + L-glutamine = D-erythro-1-(imidazol-4-yl)glycerol 3-phosphate + 5-amino-1-(5-phospho-beta-D-ribosyl)imidazole-4-carboxamide + L-glutamate + H(+). It catalyses the reaction L-glutamine + H2O = L-glutamate + NH4(+). It participates in amino-acid biosynthesis; L-histidine biosynthesis; L-histidine from 5-phospho-alpha-D-ribose 1-diphosphate: step 5/9. Functionally, IGPS catalyzes the conversion of PRFAR and glutamine to IGP, AICAR and glutamate. The HisH subunit catalyzes the hydrolysis of glutamine to glutamate and ammonia as part of the synthesis of IGP and AICAR. The resulting ammonia molecule is channeled to the active site of HisF. The sequence is that of Imidazole glycerol phosphate synthase subunit HisH (hisH) from Xylella fastidiosa (strain 9a5c).